We begin with the raw amino-acid sequence, 374 residues long: Tomoregulin-2 (374 aa).

A signal peptide spans 1–40 (MVLWESPRQCSSWTLCEGFCWLLLLPVMLLIVARPVKLAA). The Extracellular portion of the chain corresponds to 41–320 (FPTSLSDCQT…VPGPVRFQYV (280 aa)). Kazal-like domains follow at residues 90–137 (VCQF…SCAT) and 181–229 (VCNI…RCQD). 6 disulfides stabilise this stretch: Cys-91–Cys-121, Cys-95–Cys-114, Cys-103–Cys-135, Cys-182–Cys-213, Cys-186–Cys-206, and Cys-195–Cys-227. A glycan (N-linked (GlcNAc...) (complex) asparagine; atypical) is linked at Asn-204. An N-linked (GlcNAc...) asparagine glycan is attached at Asn-230. Residues 261–301 (HHIPCPEHYNGFCMHGKCEHSINMQEPSCRCDAGYTGQHCE) form the EGF-like domain. Cystine bridges form between Cys-265–Cys-278, Cys-273–Cys-289, and Cys-291–Cys-300. Positions 303 to 320 (KDYSVLYVVPGPVRFQYV) are required for shedding. Residues 321–341 (LIAAVIGTIQIAVICVVVLCI) form a helical membrane-spanning segment. Residues 342–374 (TRKCPRSNRIHRQKQNTGHYSSDNTTRASTRLI) lie on the Cytoplasmic side of the membrane. The segment at 353 to 374 (RQKQNTGHYSSDNTTRASTRLI) is disordered. The span at 356-374 (QNTGHYSSDNTTRASTRLI) shows a compositional bias: polar residues.

This sequence belongs to the tomoregulin family. O-glycosylated; contains chondroitin sulfate glycosaminoglycans. In terms of processing, a soluble form (TMEFF2-ECD) is produced by proteolytic shedding. This shedding can be induced by phorbol ester or pro-inflammatory cytokines such as TNFalpha, and is mediated by ADAM17. Highly expressed in adult and fetal brain, spinal cord and prostate. Expressed in all brain regions except the pituitary gland, with highest levels in amygdala and corpus callosum. Expressed in the pericryptal myofibroblasts and other stromal cells of normal colonic mucosa. Expressed in prostate carcinoma. Down-regulated in colorectal cancer. Present in Alzheimer disease plaques (at protein level). Isoform 3 is expressed weakly in testis and at high levels in normal and cancerous prostate.

It is found in the membrane. It localises to the secreted. In terms of biological role, may be a survival factor for hippocampal and mesencephalic neurons. The shedded form up-regulates cancer cell proliferation, probably by promoting ERK1/2 phosphorylation. This is Tomoregulin-2 (TMEFF2) from Homo sapiens (Human).